The chain runs to 360 residues: Plastid lipid-associated protein 3, chloroplastic (360 aa).

Residues 1–37 (MATLFTVTTTSRPFPANPSKTFSPSISLKPNALSFSL) show a composition bias toward polar residues. The transit peptide at 1 to 52 (MATLFTVTTTSRPFPANPSKTFSPSISLKPNALSFSLTHHRPPRPLRFSKIR) directs the protein to the chloroplast. The disordered stretch occupies residues 1–130 (MATLFTVTTT…EWEEREADDG (130 aa)). Residues 38 to 50 (THHRPPRPLRFSK) are compositionally biased toward basic residues. Low complexity predominate over residues 53-68 (SSLPSESDSEPEGGYS). Acidic residues predominate over residues 117–127 (TNEDEWEEREA).

Belongs to the PAP/fibrillin family. Ubiquitous expression among various organs, but only at a very low level.

The protein localises to the plastid. Its subcellular location is the chloroplast. This Brassica campestris (Field mustard) protein is Plastid lipid-associated protein 3, chloroplastic (PAP3).